The primary structure comprises 741 residues: MAPSFDTLSEQDLHEEEEEEIDFSDLKEQFEVKLEEGLDTFIVIDGLPIVPEESRQKLIKFLLRKLNAVGHTSEDAVFMPTNDKNMSEGFAFVEYETPEQAIAAVKQLHGTPLDKKHTLAVNKLMDIDRYGREGRIDEEYKPPTVEPFKEKEHLRSWLSDPNARDQFALYRNDKVGVFWNNKNNPPENVVDRAHWTQLFVQWSPKGTYLASVHPQGVQLWGGPAFSKQKQFPHPFVQLVEFSPGESYLTTWSSRPIQVEEGHPVLSFEEDGKNIIVWDIVSGKPLRSFVSHDLAGGPVEGDAAPKKKVQWPAFKWSADEKYVARMLQGQSISIYELPRMNLLGKTSVKIDGVMDFEWSPATVTRDGVKQYEQLLSFWTPEIGSNPARVALMSVPSKEIVRTRNLFNVSDVKLHWQSQGTYVCVKVDRHSKSKKSMATNLEIFRVREKGVPVEVVDSLKDTVINFAWEPNGGRFVLITTGEAPSGAAVLPKTSVSFFAPEKKGPQAGNFKLVRTIEKKTSNAIYWSPKGRFVVVATVHSQSNFDLDFWDMDFEGEKAEGEKDLAANLQLMKTVEHYGVTDIDWDPTGRYVVSSASVWTHSMENGWNIHTFAGQTLAEHPTDKFKQFVWRPRPPTLLSKEEQKQVRKNLREYSKEFDEEDKYAVDIANTAVVETRKRVLNEWVAWLRREKELMAEEKDAYGIPEDADDAKVAKDAPPVSEDQGEAVVEEIVEEIVEENEEVIG.

Positions 1-10 are enriched in polar residues; it reads MAPSFDTLSE. The interval 1 to 21 is disordered; the sequence is MAPSFDTLSEQDLHEEEEEEI. An RRM domain is found at 40–126; sequence TFIVIDGLPI…HTLAVNKLMD (87 aa). 5 WD repeats span residues 193–230, 232–289, 303–344, 514–557, and 572–610; these read AHWT…KQKQ, PHPF…RSFV, APKK…LLGK, IEKK…EKAE, and VEHY…HTFA. The disordered stretch occupies residues 696 to 723; it reads DAYGIPEDADDAKVAKDAPPVSEDQGEA.

It belongs to the eIF-3 subunit B family. Component of the eukaryotic translation initiation factor 3 (eIF-3) complex.

It localises to the cytoplasm. Its function is as follows. RNA-binding component of the eukaryotic translation initiation factor 3 (eIF-3) complex, which is involved in protein synthesis of a specialized repertoire of mRNAs and, together with other initiation factors, stimulates binding of mRNA and methionyl-tRNAi to the 40S ribosome. The eIF-3 complex specifically targets and initiates translation of a subset of mRNAs involved in cell proliferation. In Aspergillus oryzae (strain ATCC 42149 / RIB 40) (Yellow koji mold), this protein is Eukaryotic translation initiation factor 3 subunit B (prt1).